The sequence spans 318 residues: Methionyl-tRNA formyltransferase (318 aa).

120-123 lines the (6S)-5,6,7,8-tetrahydrofolate pocket; sequence SLLP.

The protein belongs to the Fmt family.

It catalyses the reaction L-methionyl-tRNA(fMet) + (6R)-10-formyltetrahydrofolate = N-formyl-L-methionyl-tRNA(fMet) + (6S)-5,6,7,8-tetrahydrofolate + H(+). In terms of biological role, attaches a formyl group to the free amino group of methionyl-tRNA(fMet). The formyl group appears to play a dual role in the initiator identity of N-formylmethionyl-tRNA by promoting its recognition by IF2 and preventing the misappropriation of this tRNA by the elongation apparatus. The chain is Methionyl-tRNA formyltransferase from Variovorax paradoxus (strain S110).